The sequence spans 402 residues: Mannonate dehydratase 1 (402 aa).

Belongs to the mannonate dehydratase family. The cofactor is Fe(2+). Mn(2+) serves as cofactor.

It carries out the reaction D-mannonate = 2-dehydro-3-deoxy-D-gluconate + H2O. It participates in carbohydrate metabolism; pentose and glucuronate interconversion. Its function is as follows. Catalyzes the dehydration of D-mannonate. In Agrobacterium fabrum (strain C58 / ATCC 33970) (Agrobacterium tumefaciens (strain C58)), this protein is Mannonate dehydratase 1 (uxuA1).